Here is a 597-residue protein sequence, read N- to C-terminus: Hydrogenase-1 large chain (597 aa).

The Ni(2+) site is built by Cys-76, Cys-79, Cys-576, and Cys-579.

The protein belongs to the [NiFe]/[NiFeSe] hydrogenase large subunit family. Heterodimer of a large and a small subunit. Ni(2+) serves as cofactor.

The protein resides in the cell membrane. The catalysed reaction is H2 + A = AH2. In terms of biological role, this is one of three E.coli hydrogenases synthesized in response to different physiological conditions. HYD1 is believed to have a role in hydrogen cycling during fermentative growth. This is Hydrogenase-1 large chain (hyaB) from Escherichia coli (strain K12).